The primary structure comprises 205 residues: Fibroblast growth factor homolog (205 aa).

A signal peptide spans 1–17 (MHRLALVVATVAYLCAG).

It belongs to the heparin-binding growth factors family.

The sequence is that of Fibroblast growth factor homolog (FGF) from Orgyia pseudotsugata multicapsid polyhedrosis virus (OpMNPV).